The sequence spans 264 residues: Undecaprenyl-diphosphatase (264 aa).

A run of 8 helical transmembrane segments spans residues 1–21, 39–59, 83–103, 113–133, 143–163, 184–204, 220–240, and 243–263; these read MEIS…FLPI, QGLA…LFYF, SLLV…GLLF, SGVV…FADL, MTIK…IPGV, ANFS…LESI, LGVI…MGII, and IRML…LYLF.

Belongs to the UppP family.

It is found in the cell inner membrane. The enzyme catalyses di-trans,octa-cis-undecaprenyl diphosphate + H2O = di-trans,octa-cis-undecaprenyl phosphate + phosphate + H(+). Its function is as follows. Catalyzes the dephosphorylation of undecaprenyl diphosphate (UPP). Confers resistance to bacitracin. In Campylobacter concisus (strain 13826), this protein is Undecaprenyl-diphosphatase.